Reading from the N-terminus, the 309-residue chain is Protein FdhE (309 aa).

The protein belongs to the FdhE family.

It is found in the cytoplasm. Necessary for formate dehydrogenase activity. This Escherichia coli O127:H6 (strain E2348/69 / EPEC) protein is Protein FdhE.